The following is a 340-amino-acid chain: NADH-quinone oxidoreductase subunit H (340 aa).

A run of 8 helical transmembrane segments spans residues 4–24 (TIGILIWIIIKILVIVVPLLI), 78–98 (YLFVIAPLFALVPSLVGWAVI), 113–133 (VLYLFAMSSLGVYGVLIAGWA), 151–171 (VSYEIAMGFALVGVLLAAGSM), 184–204 (MLHWWFIPLLPLFLVFWIAGI), 244–264 (SMILISTFMAILFMGGWLSPF), 273–293 (IFFVVPGFVWLLLKISFFLFV), and 316–336 (VLIPVTIVWLIVTSLMVVAHV).

It belongs to the complex I subunit 1 family. NDH-1 is composed of 14 different subunits. Subunits NuoA, H, J, K, L, M, N constitute the membrane sector of the complex.

Its subcellular location is the cell inner membrane. It carries out the reaction a quinone + NADH + 5 H(+)(in) = a quinol + NAD(+) + 4 H(+)(out). NDH-1 shuttles electrons from NADH, via FMN and iron-sulfur (Fe-S) centers, to quinones in the respiratory chain. The immediate electron acceptor for the enzyme in this species is believed to be ubiquinone. Couples the redox reaction to proton translocation (for every two electrons transferred, four hydrogen ions are translocated across the cytoplasmic membrane), and thus conserves the redox energy in a proton gradient. This subunit may bind ubiquinone. This is NADH-quinone oxidoreductase subunit H from Legionella pneumophila (strain Corby).